We begin with the raw amino-acid sequence, 161 residues long: Phosphopantetheine adenylyltransferase (161 aa).

Serine 10 provides a ligand contact to substrate. ATP contacts are provided by residues 10–11 (SF) and histidine 18. Substrate is bound by residues lysine 42, alanine 75, and arginine 89. Residues 90–92 (GLR), glutamate 100, and 125–131 (LSPISSS) each bind ATP.

It belongs to the bacterial CoaD family. Homohexamer. It depends on Mg(2+) as a cofactor.

It is found in the cytoplasm. It catalyses the reaction (R)-4'-phosphopantetheine + ATP + H(+) = 3'-dephospho-CoA + diphosphate. Its pathway is cofactor biosynthesis; coenzyme A biosynthesis; CoA from (R)-pantothenate: step 4/5. In terms of biological role, reversibly transfers an adenylyl group from ATP to 4'-phosphopantetheine, yielding dephospho-CoA (dPCoA) and pyrophosphate. The polypeptide is Phosphopantetheine adenylyltransferase (Streptococcus agalactiae serotype III (strain NEM316)).